The following is a 367-amino-acid chain: tRNA(Ile)-lysidine synthase (367 aa).

32 to 37 (SGGSDS) lines the ATP pocket.

It belongs to the tRNA(Ile)-lysidine synthase family.

The protein resides in the cytoplasm. It catalyses the reaction cytidine(34) in tRNA(Ile2) + L-lysine + ATP = lysidine(34) in tRNA(Ile2) + AMP + diphosphate + H(+). In terms of biological role, ligates lysine onto the cytidine present at position 34 of the AUA codon-specific tRNA(Ile) that contains the anticodon CAU, in an ATP-dependent manner. Cytidine is converted to lysidine, thus changing the amino acid specificity of the tRNA from methionine to isoleucine. The chain is tRNA(Ile)-lysidine synthase from Hyphomonas neptunium (strain ATCC 15444).